The primary structure comprises 360 residues: RGG repeats nuclear RNA binding protein B (360 aa).

2 disordered regions span residues Met-1–Met-216 and Met-250–Lys-360. Position 2 is an N-acetylalanine (Ala-2). Positions Pro-58 to Gly-77 are enriched in gly residues. 2 stretches are compositionally biased toward basic and acidic residues: residues Arg-99–Arg-108 and Asp-132–Ala-157. Positions Trp-162 to Ser-176 are enriched in polar residues. 3 stretches are compositionally biased toward basic and acidic residues: residues Leu-184–Met-216, Ser-258–Arg-283, and Arg-311–Arg-336. The region spanning Lys-223 to Ile-288 is the FF domain. Ser-258 carries the phosphoserine modification.

The protein belongs to the SERBP1-HABP4 family.

It localises to the nucleus. It is found in the cytoplasm. The protein resides in the perinuclear region. Functionally, ribosome-binding protein that acts as a regulator of mRNA translation by promoting ribosome inactivation. Binds RNA. This chain is RGG repeats nuclear RNA binding protein B, found in Arabidopsis thaliana (Mouse-ear cress).